A 565-amino-acid polypeptide reads, in one-letter code: Small ribosomal subunit protein bS1 (565 aa).

6 consecutive S1 motif domains span residues 30 to 96 (SSVI…LSRD), 114 to 180 (NEKV…VSRR), 201 to 269 (GQVI…LGMK), 286 to 356 (NARF…LGLK), 373 to 443 (GSTV…LGVK), and 454 to 529 (GDVK…VSIK).

Belongs to the bacterial ribosomal protein bS1 family. Post-translationally, the initiator methionine may be removed.

Its function is as follows. Binds mRNA; thus facilitating recognition of the initiation point. It is needed to translate mRNA with a short Shine-Dalgarno (SD) purine-rich sequence. The polypeptide is Small ribosomal subunit protein bS1 (rpsA) (Rhodopseudomonas palustris (strain ATCC BAA-98 / CGA009)).